Reading from the N-terminus, the 94-residue chain is MGRSLKKGPYCEDKLLKKIELMNQSGQKKVIKTWSRRSTIMPEMIGHTLAVHDGRKHIPVYVTEDMVGMKLGEFAPTRTYRGHAGKSEKSSRAR.

It belongs to the universal ribosomal protein uS19 family.

In terms of biological role, protein S19 forms a complex with S13 that binds strongly to the 16S ribosomal RNA. This is Small ribosomal subunit protein uS19 from Syntrophomonas wolfei subsp. wolfei (strain DSM 2245B / Goettingen).